We begin with the raw amino-acid sequence, 207 residues long: Mediator of RNA polymerase II transcription subunit 21 (207 aa).

Positions 36–120 (IPPPDVPDAA…APDSPRTFAS (85 aa)) are disordered. Positions 91-108 (GEGAQTPGPAAGAGADPN) are enriched in low complexity. Residues 146–194 (IDSSEAEQEKRIRELEGELRQVEEERELKMRELKRLRRTLENVLTAVET) adopt a coiled-coil conformation.

It belongs to the Mediator complex subunit 21 family. Component of the Mediator complex.

The protein resides in the nucleus. Functionally, component of the Mediator complex, a coactivator involved in the regulated transcription of nearly all RNA polymerase II-dependent genes. Mediator functions as a bridge to convey information from gene-specific regulatory proteins to the basal RNA polymerase II transcription machinery. Mediator is recruited to promoters by direct interactions with regulatory proteins and serves as a scaffold for the assembly of a functional preinitiation complex with RNA polymerase II and the general transcription factors. The polypeptide is Mediator of RNA polymerase II transcription subunit 21 (srb7) (Aspergillus fumigatus (strain ATCC MYA-4609 / CBS 101355 / FGSC A1100 / Af293) (Neosartorya fumigata)).